Here is a 456-residue protein sequence, read N- to C-terminus: Probable serine incorporator (456 aa).

Transmembrane regions (helical) follow at residues 10-32 (AASC…CCNF), 44-64 (IVYS…LAPG), 95-115 (VCFG…GVTS), 126-146 (GFWG…FFIP), 153-173 (VWMY…LVLL), 195-215 (VWAV…VAGI), 234-254 (KFFI…AIHP), 265-285 (LLQA…ALSF), 301-321 (LAGM…MVVY), 383-403 (VAYS…YIMM), and 430-450 (IASS…PALF).

Belongs to the TDE1 family.

Its subcellular location is the endoplasmic reticulum membrane. Its function is as follows. Enhances the incorporation of serine into phosphatidylserine and sphingolipids. This Nematostella vectensis (Starlet sea anemone) protein is Probable serine incorporator (serinc).